Here is a 116-residue protein sequence, read N- to C-terminus: NADH-quinone oxidoreductase subunit A (116 aa).

3 helical membrane-spanning segments follow: residues 3 to 23, 61 to 81, and 85 to 105; these read FTLL…ALGI, FAIL…WAVV, and LGVY…LGLA.

It belongs to the complex I subunit 3 family. In terms of assembly, NDH-1 is composed of 14 different subunits. Subunits NuoA, H, J, K, L, M, N constitute the membrane sector of the complex.

It localises to the cell inner membrane. It catalyses the reaction a quinone + NADH + 5 H(+)(in) = a quinol + NAD(+) + 4 H(+)(out). Its function is as follows. NDH-1 shuttles electrons from NADH, via FMN and iron-sulfur (Fe-S) centers, to quinones in the respiratory chain. The immediate electron acceptor for the enzyme in this species is believed to be a menaquinone. Couples the redox reaction to proton translocation (for every two electrons transferred, four hydrogen ions are translocated across the cytoplasmic membrane), and thus conserves the redox energy in a proton gradient. This Phocaeicola vulgatus (strain ATCC 8482 / DSM 1447 / JCM 5826 / CCUG 4940 / NBRC 14291 / NCTC 11154) (Bacteroides vulgatus) protein is NADH-quinone oxidoreductase subunit A.